The sequence spans 557 residues: Formate--tetrahydrofolate ligase (557 aa).

An ATP-binding site is contributed by 66-73 (TPAGEGKS).

Belongs to the formate--tetrahydrofolate ligase family.

The catalysed reaction is (6S)-5,6,7,8-tetrahydrofolate + formate + ATP = (6R)-10-formyltetrahydrofolate + ADP + phosphate. The protein operates within one-carbon metabolism; tetrahydrofolate interconversion. The sequence is that of Formate--tetrahydrofolate ligase from Clostridium botulinum (strain 657 / Type Ba4).